The primary structure comprises 234 residues: HTH-type transcriptional regulator ArcR (234 aa).

40-129 (VRHYTKGQVI…MAFLCKANDD (90 aa)) is a binding site for a nucleoside 3',5'-cyclic phosphate. Residues 155-228 (KFAKDRIIKL…HKNWLVSKHL (74 aa)) enclose the HTH crp-type domain. The H-T-H motif DNA-binding region spans 188–207 (IQLMSDMAGISRETAGHIIH).

Its subcellular location is the cytoplasm. Positively regulates the expression of the arcABDCR operon under anaerobic conditions, thus playing an essential role in arginine catabolism. May also control the expression of genes encoding proteins which are involved in anaerobic metabolism. Can bind cyclic AMP. This Staphylococcus aureus (strain USA300 / TCH1516) protein is HTH-type transcriptional regulator ArcR (arcR).